Here is a 203-residue protein sequence, read N- to C-terminus: Auxin-responsive protein IAA4 (203 aa).

Residues 1 to 31 form a disordered region; that stretch reads MEECKGGGMSPSSSMDSSTHPALSTTSSAAT. Over residues 10 to 31 the composition is skewed to low complexity; it reads SPSSSMDSSTHPALSTTSSAAT. The EAR-like (transcriptional repression) motif lies at 40–44; sequence LRLGL. Residues 108–202 form the PB1 domain; sequence TLFVKVYMEG…KKLRIARMDK (95 aa).

The protein belongs to the Aux/IAA family. Homodimers and heterodimers.

The protein resides in the nucleus. Functionally, aux/IAA proteins are short-lived transcriptional factors that function as repressors of early auxin response genes at low auxin concentrations. In Oryza sativa subsp. japonica (Rice), this protein is Auxin-responsive protein IAA4 (IAA4).